The sequence spans 214 residues: Transcription factor MYB24 (214 aa).

2 consecutive HTH myb-type domains span residues 14-66 (DAEV…LNYL) and 67-121 (RPDV…QKYI). 2 consecutive DNA-binding regions (H-T-H motif) follow at residues 42–66 (WNSL…LNYL) and 94–117 (WSKI…RTKI).

In terms of assembly, interacts (via N-terminus) with TIFY10A/JAZ1, TIFY5A/JAZ8 AND TIFY3A/JAZ11. Expressed specifically in flowers. Expressed in all four whorls of the flower and in the vascular tissue of stamen filament and sepals. Detected in male and female gametophytes, especially in microspores and ovules. Weakly expressed in petals and the upper part of pistils.

The protein localises to the nucleus. In terms of biological role, transcription factor acting redundantly with MYB21 and MYB57 to control stamen filament elongation in the late developed flowers. Contributes with MYB21 to induction of MYB108 by jasmonate. Repressed at the transcript levels by DELLA proteins. This chain is Transcription factor MYB24 (MYB24), found in Arabidopsis thaliana (Mouse-ear cress).